The chain runs to 277 residues: MKDKFYELSIKTSNFYDEILELVFSFGVTCVEELDHEIIIREEYDLKDIAWGVEEYAKGLSSVRKISNDLKISLNLKENKDWLGEYKRAVKPILVDKIYIRPSWEESLSGVTNIIIDPALAFGSGHHESTNSCLQLLQKYAKSGDTALDVGCGSGILSIALAKLGCKVDACDTDEQATQSSLSNAQLNEVKFNKIWTGSIANLEQKYDIVVANIIADVIFMLSNDLKKSLKKGGYLVLSGILNKYEDRIKDTFKDLELVEIKQANDWVSFVYKEMDE.

Residues Thr130, Gly151, Asp172, and Asn213 each coordinate S-adenosyl-L-methionine.

It belongs to the methyltransferase superfamily. PrmA family.

It localises to the cytoplasm. It carries out the reaction L-lysyl-[protein] + 3 S-adenosyl-L-methionine = N(6),N(6),N(6)-trimethyl-L-lysyl-[protein] + 3 S-adenosyl-L-homocysteine + 3 H(+). In terms of biological role, methylates ribosomal protein L11. The polypeptide is Ribosomal protein L11 methyltransferase (Campylobacter concisus (strain 13826)).